Reading from the N-terminus, the 81-residue chain is Prophage excisionase-like protein (81 aa).

To lambdoid phages excisionases.

In Escherichia coli (strain K12), this protein is Prophage excisionase-like protein (xisE).